A 90-amino-acid polypeptide reads, in one-letter code: Putative defensin-like protein 243 (90 aa).

Residues 1-19 (MKVEVIFLASCVLFSLIHA) form the signal peptide. 4 cysteine pairs are disulfide-bonded: Cys-33–Cys-88, Cys-43–Cys-72, Cys-53–Cys-82, and Cys-70–Cys-84.

It belongs to the DEFL family.

Its subcellular location is the secreted. The sequence is that of Putative defensin-like protein 243 (SCRL9) from Arabidopsis thaliana (Mouse-ear cress).